The following is a 913-amino-acid chain: Glutamate receptor ionotropic, kainate 2 (913 aa).

Over 1-566 (MCAGTMKIIS…VFSFLNPLSP (566 aa)) the chain is Extracellular. N-linked (GlcNAc...) asparagine glycans are attached at residues Asn72, Asn78, Asn280, Asn383, Asn417, Asn428, and Asn435. A disulfide bond links Cys101 and Cys352. The L-glutamate site is built by Pro521, Ala523, and Arg528. Asn551 carries N-linked (GlcNAc...) asparagine glycosylation. The chain crosses the membrane as a helical span at residues 567 to 587 (DIWMYILLAYLGVSCVLFVIA). Over 588-643 (RFSPYEWYNPHPCNPDSDVVENNFTLLNSFWFGVGALMQQGSELMPKALSTRIVGG) the chain is Cytoplasmic. Residues 644 to 664 (IWWFFTLIIISSYTANLAAFL) form a helical membrane-spanning segment. Residues 665–824 (TVERMESPID…KEASALGVQN (160 aa)) are Extracellular-facing. L-glutamate is bound by residues Ala694, Thr695, and Glu743. Cys755 and Cys809 are joined by a disulfide. N-linked (GlcNAc...) asparagine glycosylation occurs at Asn756. Residues 825 to 845 (IGGIFIVLAAGLVLSVFVAVG) form a helical membrane-spanning segment. The Cytoplasmic portion of the chain corresponds to 846–913 (EFLYKSKKNA…RRLPGKETMA (68 aa)).

The protein belongs to the glutamate-gated ion channel (TC 1.A.10.1) family. GRIK2 subfamily. In terms of assembly, homotetramer and heterotetramer with GRIK5. Tetramers may be formed by the dimerization of dimers.

Its subcellular location is the cell membrane. The protein resides in the postsynaptic cell membrane. The catalysed reaction is Ca(2+)(in) = Ca(2+)(out). The enzyme catalyses Na(+)(in) = Na(+)(out). With respect to regulation, cold receptor activity activated by temperatures between 10-19 degrees Celsius. Functionally, ionotropic glutamate receptor that functions as a cation-permeable ligand-gated ion channel, gated by L-glutamate and the glutamatergic agonist kainic acid. L-glutamate acts as an excitatory neurotransmitter at many synapses in the central nervous system. Binding of the excitatory neurotransmitter L-glutamate induces a conformation change, leading to the opening of the cation channel, and thereby converts the chemical signal to an electrical impulse. The receptor then desensitizes rapidly and enters a transient inactive state, characterized by the presence of bound agonist. Its function is as follows. Independent of its ionotropic glutamate receptor activity, acts as a thermoreceptor conferring sensitivity to cold temperatures. Functions in dorsal root ganglion neurons. The chain is Glutamate receptor ionotropic, kainate 2 (grik2) from Xenopus laevis (African clawed frog).